Here is a 224-residue protein sequence, read N- to C-terminus: Artemin (224 aa).

The signal sequence occupies residues 1-39 (MELGLGEPTALSHCLRPRWQPALWPTLAALALLSSVTEA). Positions 40 to 111 (SLDPMSRSPA…AALRGARAAR (72 aa)) are excised as a propeptide. Residues 41–124 (LDPMSRSPAS…RSSRARATDA (84 aa)) form a disordered region. Positions 80-95 (RPPPQSPQPAPPPPGP) are enriched in pro residues. Residues 96–116 (ALQSPPAALRGARAARAGTRS) show a composition bias toward low complexity. 3 disulfides stabilise this stretch: C127–C192, C154–C220, and C158–C222. N-linked (GlcNAc...) asparagine glycosylation is present at N206.

Belongs to the TGF-beta family. GDNF subfamily. As to quaternary structure, homodimer; disulfide-linked. Interacts with GFRA3 coreceptor and RET: forms a 2:2:2 ternary complex composed of ARTN ligand, GFRA3 and RET receptor. As to expression, cochlea. Expressed at higher level in sesorineural epithelium than in the modiolus region or substantia nigra.

Its subcellular location is the secreted. Functionally, growth factor that supports the survival of sensory and sympathetic peripheral neurons in culture and also supports the survival of dopaminergic neurons of the ventral mid-brain. Acts by binding to its coreceptor, GFRA3, leading to autophosphorylation and activation of the RET receptor. Strong attractant of gut hematopoietic cells thus promoting the formation Peyer's patch-like structures, a major component of the gut-associated lymphoid tissue. In Rattus norvegicus (Rat), this protein is Artemin (Artn).